The sequence spans 522 residues: MKLRVRLQKRTQPLEVPESEPTLGQLRAHLIQDLLPTLGFSSDTRFAITLNNKDALTGDEETLASYGIVSGDLICLVLEDEMPAPNLPSSTDSEHSSLQNNDQPPLAATSSQANIPDEQGSDSSHGQVTQYDAWTDDSMEGPSHSAEAVSIQDAMSVEEASGFHPLEPMLCSETEDGQVPHSLEALYQSAGCSTVSDALIVLVHLLMLESGYIPQGTEAKAASMPEKWKSSGVYKLQYTHPLCEGGSAVLTCVPLGKLIMINATIKVNGGIKNVKSVQLKPGAYVRRAEPGESAAKVYKDLKKLSRLFKDQLVYPLLAFTRQVLNLPDVFGLVVLPLELKLRIFRLLDVHSVLALSAVCHDLLIASNDPLLWRCLYLRDFRDSTIRGPDTDWKELYRKKHIQRKEAQRMRHVMYLPSVHPIPFCPIPVYPRPYLPTTLLPPGIIGGEYDERPILPSVGDPVTSLIPRPGEPPSQFRPVRPRFDPVGPLPGSNSLLPGRASPNNRFPFRPGRGRSADNRLPYL.

Disordered stretches follow at residues 1–20 (MKLR…PESE) and 85–128 (PNLP…HGQV). Residues 1-88 (MKLRVRLQKR…EDEMPAPNLP (88 aa)) are ubiquitin-like. Residues 87–114 (LPSSTDSEHSSLQNNDQPPLAATSSQAN) show a composition bias toward polar residues. An important for interaction with PINK1 region spans residues 92–129 (DSEHSSLQNNDQPPLAATSSQANIPDEQGSDSSHGQVT). Positions 129–169 (TQYDAWTDDSMEGPSHSAEAVSIQDAMSVEEASGFHPLEPM) are important for interaction with CDK6. Residues 180-324 (PHSLEALYQS…PLLAFTRQVL (145 aa)) form an important for dimerization and interaction with PSMF1 region. The F-box domain occupies 329-375 (VFGLVVLPLELKLRIFRLLDVHSVLALSAVCHDLLIASNDPLLWRCL). Residues 381 to 522 (RDSTIRGPDT…RSADNRLPYL (142 aa)) are important for interaction with CDK6. Omega-N-methylarginine occurs at positions 431 and 451. Residues 459 to 522 (DPVTSLIPRP…RSADNRLPYL (64 aa)) form a disordered region. The RFDP motif signature appears at 481–484 (RFDP). Arginine 518 carries the post-translational modification Asymmetric dimethylarginine.

As to quaternary structure, part of the SCF (SKP1-CUL1-F-box) E3 ubiquitin-protein ligase complex SCF(FBXO7) formed of CUL1, SKP1, RBX1 and FBXO7. Interacts via its C-terminal proline-rich region with DLGAP5. Interacts with BIRC2. Interacts with CDK6 and promotes its interaction with D-type cyclin. Interacts (via the N-terminal Ubl domain) with PRKN. Interacts (via N-terminal region) with PINK1. Interacts with PSMF1.

The protein resides in the cytoplasm. The protein localises to the nucleus. Its subcellular location is the mitochondrion. It is found in the cytosol. It functions in the pathway protein modification; protein ubiquitination. Substrate recognition component of a SCF (SKP1-CUL1-F-box protein) E3 ubiquitin-protein ligase complex which mediates the ubiquitination and subsequent proteasomal degradation of target proteins and plays a role in several biological processes such as cell cycle, cell proliferation, or maintenance of chromosome stability. Recognizes and ubiquitinates BIRC2 and the cell cycle regulator DLGAP5. Plays a role downstream of PINK1 in the clearance of damaged mitochondria via selective autophagy (mitophagy) by targeting PRKN to dysfunctional depolarized mitochondria. Promotes MFN1 ubiquitination. Mediates the ubiquitination and proteasomal degradation of UXT isoform 2, thereby impairing the NF-kappa-B signaling pathway. Inhibits NF-kappa-B pathway also by promoting the ubiquitinatioin of TRAF2. Affects the assembly state and activity of the proteasome in the cells including neurons by ubiquitinating the proteasomal subunit PSMA2 via 'Lys-63'-linked polyubiquitin chains. Promotes 'Lys-48'-linked polyubiquitination SIRT7, leading to the hydrogen peroxide-induced cell death. The sequence is that of F-box only protein 7 (Fbxo7) from Rattus norvegicus (Rat).